A 273-amino-acid chain; its full sequence is Proteasome subunit beta type-7-A (273 aa).

Positions 1–37 (MSQSTVDVPPKGGFSFDLCKRNDMLTQKGLKAPSFLK) are cleaved as a propeptide — removed in mature form. Residue T40 is the Nucleophile of the active site.

The protein belongs to the peptidase T1B family. As to quaternary structure, component of the 20S core complex of the 26S proteasome. The 26S proteasome is composed of a core protease (CP), known as the 20S proteasome, capped at one or both ends by the 19S regulatory particle (RP/PA700). The 20S proteasome core is composed of 28 subunits that are arranged in four stacked rings, resulting in a barrel-shaped structure. The two end rings are each formed by seven alpha subunits, and the two central rings are each formed by seven beta subunits. The catalytic chamber with the active sites is on the inside of the barrel.

The protein resides in the cytoplasm. Its subcellular location is the nucleus. It carries out the reaction Cleavage of peptide bonds with very broad specificity.. The proteasome is a multicatalytic proteinase complex which is characterized by its ability to cleave peptides with Arg, Phe, Tyr, Leu, and Glu adjacent to the leaving group at neutral or slightly basic pH. The proteasome has an ATP-dependent proteolytic activity. The chain is Proteasome subunit beta type-7-A (PBB1) from Arabidopsis thaliana (Mouse-ear cress).